The following is a 399-amino-acid chain: uncharacterized protein (399 aa).

The segment at 375 to 399 (AAGGHRGSHGKSEQAATVRVVDDRR) is disordered.

Belongs to the mycobacterial PPE family.

This is an uncharacterized protein from Mycobacterium tuberculosis (strain ATCC 25618 / H37Rv).